The following is a 381-amino-acid chain: Cytochrome b (381 aa).

4 helical membrane passes run 34-54 (FGSL…FLAM), 78-99 (WLIR…YLHI), 114-134 (WNIG…GYVL), and 179-199 (FFAF…IHLL). H84 and H98 together coordinate heme b. Heme b contacts are provided by H183 and H197. Position 202 (H202) interacts with a ubiquinone. The next 4 helical transmembrane spans lie at 227 to 247 (YKDL…ALFM), 289 to 309 (LGGV…PLLH), 321 to 341 (MTQI…WIGG), and 348 to 368 (FMMV…IIMP).

The protein belongs to the cytochrome b family. In terms of assembly, the cytochrome bc1 complex contains 3 respiratory subunits (MT-CYB, CYC1 and UQCRFS1), 2 core proteins (UQCRC1 and UQCRC2) and probably 6 low-molecular weight proteins. It depends on heme b as a cofactor.

Its subcellular location is the mitochondrion inner membrane. Functionally, component of the ubiquinol-cytochrome c reductase complex (complex III or cytochrome b-c1 complex) that is part of the mitochondrial respiratory chain. The b-c1 complex mediates electron transfer from ubiquinol to cytochrome c. Contributes to the generation of a proton gradient across the mitochondrial membrane that is then used for ATP synthesis. The sequence is that of Cytochrome b (mt-cyb) from Prionace glauca (Blue shark).